The chain runs to 405 residues: MLAVGATLCLLSFLTGATGRLAPDDLCYAEPRKTGPMPRSKPKHQPLLFEAPKVALTAESKGCQLILLDPPIDMGYRLEDKINASIAWFFDFGNCRMPIAYREYYDCVGNAIPSPETCDGYSFTLVKTEGVVEFTIVNMSLLLQPGIYDSGSFIYSALLDMDVLTGRVILNVENDTNYPCGMTHGLTADGNINVDETTHTTPHPRAVGCFPELINFDAWENVTFEEMGIPDPNSFLDDESDYPNTMDCYSWDLYTYPKSLKQAEGPQTLLIGAVGLRILAQAWKFVENETYSQHTRTYTRDAKEVDVTQPSPVQADSVLAKKRTSMKNNPIYSEGKPHAKPFSTIDSIHTEGMKNNPVYSESLMLNVQHSDSITTGGVLHGLQDCDNQLKTVYICLALIGLAHVP.

An N-terminal signal peptide occupies residues 1–19 (MLAVGATLCLLSFLTGATG). N83, N138, N174, N221, and N288 each carry an N-linked (GlcNAc...) asparagine; by host glycan. Residues 389–405 (LKTVYICLALIGLAHVP) traverse the membrane as a helical segment.

It belongs to the alphaherpesvirinae glycoprotein G family.

Its subcellular location is the virion membrane. In terms of biological role, chemokine-binding protein that inhibits neutrophils' chemotaxis. This Equine herpesvirus 4 (strain 1942) (EHV-4) protein is Envelope glycoprotein G (gG).